Reading from the N-terminus, the 254-residue chain is MAEAVLRVARRQLSQRGGSGAPILLRQMFEPVSCTFTYLLGDRESREAVLIDPVLETAPRDAQLIKELGLRLLYAVNTHCHADHITGSGLLRSLLPGCQSVISRLSGAQADLHIEDGDSIRFGRFALETRASPGHTPGCVTFVLNDHSMAFTGDALLIRGCGRTDFQQGCAKTLYHSVHEKIFTLPGDCLIYPAHDYHGFTVSTVEEERTLNPRLTLSCEEFVKIMGNLNLPKPQQIDFAVPANMRCGVQTPTA.

The N-terminal 7 residues, 1 to 7 (MAEAVLR), are a transit peptide targeting the mitochondrion. Phosphoserine is present on residues Ser14 and Ser19. Lys66 carries the N6-acetyllysine modification. His79, His135, and Asp154 together coordinate Fe cation. Lys172 is modified (N6-acetyllysine; alternate). N6-succinyllysine; alternate is present on Lys172.

Belongs to the metallo-beta-lactamase superfamily. Glyoxalase II family. Homodimer. Monomer. Interacts with TST. May interact with RELA. Fe(2+) is required as a cofactor. In terms of tissue distribution, ubiquitously expressed.

It localises to the cytoplasm. Its subcellular location is the nucleus. The protein localises to the mitochondrion matrix. It carries out the reaction S-sulfanylglutathione + O2 + H2O = sulfite + glutathione + 2 H(+). Glutathione increases enzyme activity. In terms of biological role, sulfur dioxygenase that plays an essential role in hydrogen sulfide catabolism in the mitochondrial matrix. Hydrogen sulfide (H(2)S) is first oxidized by SQRDL, giving rise to cysteine persulfide residues. ETHE1 consumes molecular oxygen to catalyze the oxidation of the persulfide, once it has been transferred to a thiophilic acceptor, such as glutathione (R-SSH). Plays an important role in metabolic homeostasis in mitochondria by metabolizing hydrogen sulfide and preventing the accumulation of supraphysiological H(2)S levels that have toxic effects, due to the inhibition of cytochrome c oxidase. First described as a protein that can shuttle between the nucleus and the cytoplasm and suppress p53-induced apoptosis by sequestering the transcription factor RELA/NFKB3 in the cytoplasm and preventing its accumulation in the nucleus. In Homo sapiens (Human), this protein is Persulfide dioxygenase ETHE1, mitochondrial (ETHE1).